The following is a 281-amino-acid chain: Very long chain fatty acid elongase 7 (281 aa).

An N-acetylalanine modification is found at alanine 2. Residues 2–27 (AFSDLTSRTVRFYDNWIKDADPRVEN) are Lumenal-facing. The helical transmembrane segment at 28–48 (WLLMSSPLPQTIILGLYVYFV) threads the bilayer. At 49–72 (TSLGPKLMENRKPFELKKAMITYN) the chain is on the cytoplasmic side. A helical membrane pass occupies residues 73–93 (FFIVLFSVYMCYEFVMSGWGT). Topologically, residues 94-115 (GYSFRCDIVDYSQSPRAMRMVH) are lumenal. A disulfide bond links cysteine 99 and cysteine 231. A helical membrane pass occupies residues 116–136 (TCWLYYFSKFIELFDTIFFVL). 5 residues coordinate 3-oxoeicosanoyl-CoA: lysine 124, arginine 137, lysine 139, glutamine 142, and histidine 147. Topologically, residues 137-142 (RKKNSQ) are cytoplasmic. Residues 143-162 (VTFLHVFHHTIMPWTWWFGV) traverse the membrane as a helical segment. The HxxHH motif motif lies at 147 to 151 (HVFHH). Histidine 150 (nucleophile) is an active-site residue. Topologically, residues 163 to 176 (KFAAGGLGTFHALL) are lumenal. Residues 177–197 (NTAVHVVMYFYYGLCAMGPAY) form a helical membrane-spanning segment. The 3-oxoeicosanoyl-CoA site is built by tyrosine 187, lysine 204, threonine 208, and glutamine 211. Over 198-206 (QKYLWWKKH) the chain is Cytoplasmic. Residues 207 to 227 (LTSLQLVQFVLVTVHIGQIFF) form a helical membrane-spanning segment. Over 228–236 (MEDCNYQYP) the chain is Lumenal. Residues 237-257 (VFLYIIMSYGCIFLLLFLHFW) form a helical membrane-spanning segment. Topologically, residues 258–281 (YRAYTKGQRLPKTMENGNCKSKHH) are cytoplasmic. Arginine 266 contributes to the 3-oxoeicosanoyl-CoA binding site. The short motif at 277-281 (KSKHH) is the Di-lysine motif element.

The protein belongs to the ELO family. ELOVL7 subfamily. As to quaternary structure, homodimer. Interacts with TECR.

Its subcellular location is the endoplasmic reticulum membrane. The enzyme catalyses a very-long-chain acyl-CoA + malonyl-CoA + H(+) = a very-long-chain 3-oxoacyl-CoA + CO2 + CoA. The catalysed reaction is eicosanoyl-CoA + malonyl-CoA + H(+) = 3-oxodocosanoyl-CoA + CO2 + CoA. It carries out the reaction (5Z,8Z,11Z,14Z)-eicosatetraenoyl-CoA + malonyl-CoA + H(+) = (7Z,10Z,13Z,16Z)-3-oxodocosatetraenoyl-CoA + CO2 + CoA. It catalyses the reaction (6Z,9Z,12Z)-octadecatrienoyl-CoA + malonyl-CoA + H(+) = (8Z,11Z,14Z)-3-oxoeicosatrienoyl-CoA + CO2 + CoA. The enzyme catalyses (9Z,12Z)-octadecadienoyl-CoA + malonyl-CoA + H(+) = (11Z,14Z)-3-oxoicosa-11,14-dienoyl-CoA + CO2 + CoA. The catalysed reaction is (9Z)-octadecenoyl-CoA + malonyl-CoA + H(+) = 3-oxo-(11Z)-eicosenoyl-CoA + CO2 + CoA. It carries out the reaction octadecanoyl-CoA + malonyl-CoA + H(+) = 3-oxoeicosanoyl-CoA + CO2 + CoA. It catalyses the reaction hexadecanoyl-CoA + malonyl-CoA + H(+) = 3-oxooctadecanoyl-CoA + CO2 + CoA. The enzyme catalyses (9Z,12Z,15Z)-octadecatrienoyl-CoA + malonyl-CoA + H(+) = (11Z,14Z,17Z)-3-oxoeicosatrienoyl-CoA + CO2 + CoA. It functions in the pathway lipid metabolism; fatty acid biosynthesis. Functionally, catalyzes the first and rate-limiting reaction of the four reactions that constitute the long-chain fatty acids elongation cycle. This endoplasmic reticulum-bound enzymatic process allows the addition of 2 carbons to the chain of long- and very long-chain fatty acids (VLCFAs) per cycle. Condensing enzyme with higher activity toward C18 acyl-CoAs, especially C18:3(n-3) acyl-CoAs and C18:3(n-6)-CoAs. Also active toward C20:4-, C18:0-, C18:1-, C18:2- and C16:0-CoAs, and weakly toward C20:0-CoA. Little or no activity toward C22:0-, C24:0-, or C26:0-CoAs. May participate in the production of saturated and polyunsaturated VLCFAs of different chain lengths that are involved in multiple biological processes as precursors of membrane lipids and lipid mediators. The sequence is that of Very long chain fatty acid elongase 7 from Rattus norvegicus (Rat).